Consider the following 384-residue polypeptide: GTPase Obg (384 aa).

Positions 1 to 159 constitute an Obg domain; sequence MKFIDEAKIE…RSLQLELKVL (159 aa). Residues 20-46 are disordered; the sequence is ATSFRREKFVPRGGPDGGDGGKGGSVW. Residues 33–43 are compositionally biased toward gly residues; that stretch reads GPDGGDGGKGG. Residues 160 to 348 form the OBG-type G domain; it reads ADVGLLGMPN…LVHQINQYLT (189 aa). GTP-binding positions include 166-173, 191-195, 213-216, 284-287, and 329-331; these read GMPNAGKS, FTTLH, DIPG, NKLD, and SAL. Positions 173 and 193 each coordinate Mg(2+).

This sequence belongs to the TRAFAC class OBG-HflX-like GTPase superfamily. OBG GTPase family. In terms of assembly, monomer. Mg(2+) is required as a cofactor.

The protein resides in the cytoplasm. In terms of biological role, an essential GTPase which binds GTP, GDP and possibly (p)ppGpp with moderate affinity, with high nucleotide exchange rates and a fairly low GTP hydrolysis rate. Plays a role in control of the cell cycle, stress response, ribosome biogenesis and in those bacteria that undergo differentiation, in morphogenesis control. The protein is GTPase Obg of Neisseria meningitidis serogroup C / serotype 2a (strain ATCC 700532 / DSM 15464 / FAM18).